The chain runs to 528 residues: ADP,ATP carrier protein 1 (528 aa).

The next 12 membrane-spanning stretches (helical) occupy residues 24–44 (LKKVLPMFLMFFCISFNYTIL), 63–83 (IPFIKLWLVVPSAVVFMLIYA), 93–113 (ALFFAVLSPFVVFFALFPVVI), 124–144 (AFADTLQSILPSGFMGFIAML), 149–169 (FAVFYVLSELWGSVMLSLMFW), 184–204 (FYALFGVGANVALLISGPAII), 220–240 (WGVSLYFLMAMFLCSCAIIAA), 284–304 (YMLLLALLVICYGICINLVEV), 327–347 (FSFWTGVVSVFVMLFIGGNVI), 356–376 (ALVTPIMVLVTGAVFFALVIF), 381–401 (TGLVAALGTTPLMLAVVVGAI), and 463–483 (IGAMTPFLAVALFAIIMVWLT).

This sequence belongs to the ADP/ATP translocase tlc family.

The protein localises to the cell membrane. The protein is ADP,ATP carrier protein 1 (tlcA) of Chlamydia trachomatis serovar D (strain ATCC VR-885 / DSM 19411 / UW-3/Cx).